Reading from the N-terminus, the 184-residue chain is Large ribosomal subunit protein uL6 (184 aa).

Belongs to the universal ribosomal protein uL6 family. As to quaternary structure, part of the 50S ribosomal subunit.

This protein binds to the 23S rRNA, and is important in its secondary structure. It is located near the subunit interface in the base of the L7/L12 stalk, and near the tRNA binding site of the peptidyltransferase center. The chain is Large ribosomal subunit protein uL6 from Thermotoga maritima (strain ATCC 43589 / DSM 3109 / JCM 10099 / NBRC 100826 / MSB8).